The sequence spans 452 residues: Plasminogen-binding protein PgbA (452 aa).

A disordered region spans residues 265–452; sequence QEAIKEPKKA…RRKALEAGKK (188 aa). Composition is skewed to basic and acidic residues over residues 284–310 and 317–373; these read LEEK…DERK and KAME…KEPS. Polar residues predominate over residues 374–391; sequence DGNNATQQGEKQNAPKEN. Basic and acidic residues predominate over residues 392 to 452; the sequence is NAQKEENKPN…RRKALEAGKK (61 aa).

It localises to the cell surface. Functionally, binds plasminogen, specifically, and in a concentration and lysine-dependent manner. Plasminogen is the precursor of plasmin, a serine protease that cleaves fibrin, fibronectin, laminin and vitronectin. Acquisition of plasminogen/plasmin could enable H.pylori to degrade host components. This chain is Plasminogen-binding protein PgbA (pgbA), found in Helicobacter pylori (strain ATCC 700392 / 26695) (Campylobacter pylori).